Here is a 399-residue protein sequence, read N- to C-terminus: Acetate kinase (399 aa).

N10 contributes to the Mg(2+) binding site. Residue K17 coordinates ATP. Substrate is bound at residue R91. The active-site Proton donor/acceptor is D148. Residues 208-212 (HLGNG), 283-285 (DCR), and 331-335 (GIGEN) each bind ATP. E385 contributes to the Mg(2+) binding site.

The protein belongs to the acetokinase family. Homodimer. The cofactor is Mg(2+). Mn(2+) serves as cofactor.

It is found in the cytoplasm. The catalysed reaction is acetate + ATP = acetyl phosphate + ADP. It functions in the pathway metabolic intermediate biosynthesis; acetyl-CoA biosynthesis; acetyl-CoA from acetate: step 1/2. Catalyzes the formation of acetyl phosphate from acetate and ATP. Can also catalyze the reverse reaction. In Shewanella amazonensis (strain ATCC BAA-1098 / SB2B), this protein is Acetate kinase.